Reading from the N-terminus, the 2671-residue chain is Stalled ribosome sensor GCN1 (2671 aa).

Ala-2 is modified (N-acetylalanine). HEAT repeat units lie at residues 140–178 (NKLVEVQCLLLLEVLGGSHKHAVDGAVKKLTKLWKENPG), 257–293 (EFKDLILPTIQKSLLRSPENVIETISSLLASVTLDLS), 294–331 (QYAMDIVKGLAGHLKSNSPRLMDEAVLALRNLARQCSD), 385–423 (IVAELFIPFLQQEVHEGTLVHAVSVLALWCNRFTMEVPK), 425–459 (LTEWFKKAFSLKTSTSAVRHAYLQCMLASYRGDTL), 460–503 (LQAL…SVAD), 560–597 (NKVQQYHRALVAVLLSRTWHVRRQAQQTVRKLLSSLGG), 599–636 (KLAHGLLEELKTVLSSHKVLPLEALVTDAGEVTEAGKA), 697–732 (DPEAFITRHLDQIIPRMTTQSPLNQSSMNAMGSLSV), and 733–770 (LSPDRVLPQLISTITASVQNPALRLVTREEFAIMQTPA). Phosphoserine is present on Ser-729. Ser-786 bears the Phosphoserine mark. Residues 804–863 (QIIELELKEEIKKKKGIKEEVQLTSKQKEMLQAQLDREAQVRRRLQELDGELEAALGLLD) adopt a coiled-coil conformation. HEAT repeat units lie at residues 879–925 (VLVD…HVTL), 979–1016 (SLVFPFLKMVLTEMPHHSEEEEEWMAQILQILTVQAQL), 1035–1072 (LPRVAMLRLLTWVIGTGSPRLQVLASDTLTTLCASSSG), 1078–1115 (FAEQEEVDVLLCALQSPCASVRETVLRGLMELHMVLPA), 1155–1192 (DLQPDLCSLLIDDVIYHEAAVRQAGAEALSQAVARYQR), 1210–1250 (YRPP…YLDS), 1251–1289 (SQVKPLFQFFVPDALNDRHPDVRKCMLDAALATLNTHGK), 1290–1332 (ENVN…HLDK), 1335–1372 (PKVKPIVAKLIAALSTPSQQVQESVASCLPPLVPAIKE), 1374–1410 (AGGMIQRLMQQLLESDKYAERKGAAYGLAGLVKGLGI), 1413–1451 (LKQQEMMAALTDAIQDKKNFRRREGALFAFEMLCTMLGK), 1455–1492 (PYVVHVLPHLLLCFGDGNQYVREAADDCAKAVMSNLSA), 1493–1530 (HGVKLVLPSLLAALEEESWRTKAGSVELLGAMAYCAPK), 1534–1571 (SCLPNIVPKLTEVLTDSHVKVQKAGQQALRQIGSVIRN), 1573–1609 (EILAIAPVLLDALTDPSRKTQKCLQTLLDTKFVHFID), 1611–1648 (PSLALIMPIVQRAFQDRSTDTRKMAAQIIGNMYSLTDQ), 1653–1690 (PYLPSVTPGLKASLLDPVPEVRTVSAKALGAMVKGMGE), 1692–1729 (CFEDLLPWLMETLTYEQSSVDRSGAAQGLAEVMAGLGV), 1731–1769 (KLEKLMPEIVATASKVDIAPHVRDGYIMMFNYLPITFGD), 1773–1810 (PYVGPIIPCILKALADENEFVRDTALRAGQRVISMYAE), 1812–1848 (AIALLLPQLEQGLFDDLWRIRFSSVQLLGDLLFHISG), 1921–1958 (EILPTLFGLLLGFLASTCADKRTIAARTLGDLVRKLGE), 1959–1996 (KILPEIIPILEEGLRSQKSDERQGVCIGLSEIMKSTSR), 2001–2038 (YFSESLVPTARKALCDPLEEVREAAAKTFEQLHSTIGH), 2039–2076 (QALEDILPFLLKQLDDEEVSEFALDGLKQVMAIKSRVV), 2078–2106 (PYLVPKLTTPPVNTRVLAFLSSVAGDALT), 2107–2146 (RHLGVILPAVMLALKEKLGTPDEQLEMANCQAVILSVEDD), 2147–2184 (TGHRIIIEDLLEATRSPEVGMRQAAAIILNIYCSRSKA), 2188–2225 (SHLRSLVSGLIRLFNDSSPVVLEESWDALNAITKKLDA), 2259–2296 (KGVTSILPVLREGVLTGSPEQKEEAAKALGLVIRLTSA), 2301–2338 (PSVVSITGPLIRILGDRFSWNVKAALLETLSLLLAKVG), 2339–2380 (IALK…IHIK), 2382–2417 (DPLFTELLNGIRAMEDPGVRDTMLQALRFVIQGAGA), 2422–2459 (VIRKNIVSLLLSMLGHDEDNTRISSAGCLGELCAFLTE), 2546–2583 (QLPAKLSSLFVKCLQNPSSDIRLVAEKMIWWANKDPLP), and 2588–2625 (QAIKPILKALLDNTKDKNTVVRAYSDQAIVNLLKMRQG). Residues 2260 to 2408 (GVTSILPVLR…GVRDTMLQAL (149 aa)) are RWDBD region. Ser-2276 is modified (phosphoserine). An HEAT 47; degenerate repeat occupies 2627–2661 (EVFQSLSKILDVASLEVLNEVNRRSLKKLASQADS).

Belongs to the GCN1 family. As to quaternary structure, interacts with EIF2AK4/GCN2; this interaction stimulates the EIF2AK4/GCN2 kinase activity and is impaired by IMPACT upon a variety of stress conditions, such as amino acid depletion, UV-C irradiation, proteasome inhibitor treatment and glucose deprivation. Interacts with IMPACT; this prevents the interaction of GCN1 with EIF2AK4/GCN2 and inhibits EIF2AK4/GCN2 kinase activity. Interacts with RNF14; interaction takes place following ribosome stalling and promotes recruitment of RNF14. Ubiquitously expressed. Expressed in skeletal muscules, ovary and testis.

It localises to the cytoplasm. Ribosome collision sensor that plays a key role in the RNF14-RNF25 translation quality control pathway, a pathway that takes place when a ribosome has stalled during translation, and which promotes ubiquitination and degradation of translation factors on stalled ribosomes. Directly binds to the ribosome and acts as a sentinel for colliding ribosomes: activated following ribosome stalling and promotes recruitment of RNF14, which directly ubiquitinates EEF1A1/eEF1A, leading to its degradation. In addition to EEF1A1/eEF1A, the RNF14-RNF25 translation quality control pathway mediates degradation of ETF1/eRF1 and ubiquitination of ribosomal protein. GCN1 also acts as a positive activator of the integrated stress response (ISR) by mediating activation of EIF2AK4/GCN2 in response to amino acid starvation. Interaction with EIF2AK4/GCN2 on translating ribosomes stimulates EIF2AK4/GCN2 kinase activity, leading to phosphorylation of eukaryotic translation initiation factor 2 (eIF-2-alpha/EIF2S1). EIF2S1/eIF-2-alpha phosphorylation converts EIF2S1/eIF-2-alpha into a global protein synthesis inhibitor, leading to a global attenuation of cap-dependent translation, and thus to a reduced overall utilization of amino acids, while concomitantly initiating the preferential translation of ISR-specific mRNAs, such as the transcriptional activator ATF4, and hence allowing ATF4-mediated reprogramming of amino acid biosynthetic gene expression to alleviate nutrient depletion. This chain is Stalled ribosome sensor GCN1, found in Homo sapiens (Human).